A 262-amino-acid polypeptide reads, in one-letter code: Protein CUSTOS (262 aa).

Disordered stretches follow at residues M1 to T79 and F126 to N262. Residues S9–S18 are compositionally biased toward low complexity. The segment covering A51–S61 has biased composition (polar residues). S61 is subject to Phosphoserine. At T79 the chain carries Phosphothreonine. S138 is subject to Phosphoserine. Phosphothreonine is present on T182. The segment covering K188 to K199 has biased composition (basic residues). Positions V200–A209 are enriched in low complexity. The segment covering T210–Q221 has biased composition (polar residues). T211 is modified (phosphothreonine). Residues K236–A241 carry the Nucleolar localization signal (NLS) motif.

The protein belongs to the CUSTOS family.

It is found in the nucleus envelope. Its function is as follows. Plays a role in the regulation of Wnt signaling pathway during early development. This is Protein CUSTOS from Homo sapiens (Human).